The chain runs to 285 residues: Pantothenate synthetase (285 aa).

30–37 (MGFLHEGH) serves as a coordination point for ATP. His-37 functions as the Proton donor in the catalytic mechanism. Gln-61 is a binding site for (R)-pantoate. Residue Gln-61 participates in beta-alanine binding. 148-151 (GKKD) contributes to the ATP binding site. Gln-154 is a (R)-pantoate binding site. ATP is bound by residues Val-177 and 185-188 (LSSR).

Belongs to the pantothenate synthetase family. Homodimer.

Its subcellular location is the cytoplasm. The catalysed reaction is (R)-pantoate + beta-alanine + ATP = (R)-pantothenate + AMP + diphosphate + H(+). It functions in the pathway cofactor biosynthesis; (R)-pantothenate biosynthesis; (R)-pantothenate from (R)-pantoate and beta-alanine: step 1/1. Its function is as follows. Catalyzes the condensation of pantoate with beta-alanine in an ATP-dependent reaction via a pantoyl-adenylate intermediate. The sequence is that of Pantothenate synthetase from Leptospira interrogans serogroup Icterohaemorrhagiae serovar copenhageni (strain Fiocruz L1-130).